Consider the following 525-residue polypeptide: Tigger transposable element-derived protein 2 (525 aa).

The HTH psq-type domain maps to 1–52; it reads MLGKRKRVVLTIKDKLDIIKKLEEGNSFKKLSVLYGIGESTVRDIKKNKERI. 2 DNA-binding regions (H-T-H motif) span residues 28–48 and 100–132; these read FKKL…IKKN and TICA…FKQR. An HTH CENPB-type domain is found at 67-139; it reads KRKSMKSSTY…KQRHGIPKAA (73 aa). Residues 168-385 enclose the DDE-1 domain; the sequence is LLPEQIYGAD…IRSNTITRAW (218 aa).

Belongs to the tigger transposable element derived protein family.

It localises to the nucleus. In Mus musculus (Mouse), this protein is Tigger transposable element-derived protein 2 (Tigd2).